The primary structure comprises 411 residues: MMP alpha-(1-&gt;4)-mannosyltransferase (411 aa).

The protein belongs to the glycosyltransferase group 1 family. Glycosyltransferase 4 subfamily.

It carries out the reaction [3-O-methyl-alpha-D-mannosyl-(1-&gt;4)](n)-3-O-methyl-D-mannose + GDP-alpha-D-mannose = alpha-D-mannosyl-(1-&gt;4)-[3-O-methyl-alpha-D-mannosyl-(1-&gt;4)](n)-3-O-methyl-D-mannose + GDP + H(+). The enzyme catalyses [3-O-methyl-alpha-D-mannosyl-(1-&gt;4)](n)-1-O,3-O-dimethyl-alpha-D-mannose + GDP-alpha-D-mannose = alpha-D-mannosyl-(1-&gt;4)-[3-O-methyl-alpha-D-mannosyl-(1-&gt;4)](n)-1-O,3-O-dimethyl-alpha-D-mannose + GDP + H(+). Activity is significantly enhanced in the presence of Mg(2+). Glycosyltransferase involved in the biosynthesis of 3-O-methylmannose polysaccharides (MMP), which are intracellular polymethylated polysaccharides implicated in the modulation of fatty acid metabolism in non-tuberculous mycobacteria. Highly specific alpha-(1-&gt;4)-mannosyltransferase that can transfer mannose units from GDP-mannose to a wide range of alpha-(1-&gt;4) oligomannosides longer than three mannoses, including all hydrolytic products of MmpH. Can use synthetic trimannosides and tetramannosides as substrates, but not mono- and disaccharides, and is significantly more active with the methylated substrates, preferring the tetramannosides over the trimannosides. The sequence is that of MMP alpha-(1-&gt;4)-mannosyltransferase from Mycolicibacterium hassiacum (strain DSM 44199 / CIP 105218 / JCM 12690 / 3849) (Mycobacterium hassiacum).